The following is an 858-amino-acid chain: MAGYTPMIQQYLKIKAEHQDAFLFFRLGDFYEMFFEDAKKASQELEITLTSRDGGAAEKIPMCGVPYHSASAYIEQLIKKGYKVAICEQTEDPKAAKGVVKREVVQLITPGTVMDGKGIHESENNFIASVSACSNGYGLALSDLTTGENLAVLIERLEDVISEIYSVGAREIVVSGSLDADTVAQLRERCGATISIEDGETDEHVTIIEHLNNEDITKTFLRLYTYLKRTQKRSLDHLQPVQVYELEEAMKIDLYSKRNLELTETIRSKNKKGSLLWLLDETKTAMGGRLLKQWIDRPLIRVNQIEERQEMVETLMSHFFEREDLRERLKEVYDLERLAGRVAFGNVNARDLIQLKESLKQVPGIKQLVASLAHDKAKERAKRIDPCGDVLELLEEALYENPPLSVKEGNLIKDGYNQKLDEYRDASRNGKDWIARLEQQEREYTGIRSLKVGFNKVFGYYIEVTKANLHLLEEGRYERKQTLTNAERYITPELKEKEALILEAENNICELEYELFTELREKVKQYIPRLQQLAKQMSELDALQCFATISENRHYTKPEFSKDEVEVIEGRHPVVEKVMDSQEYVPNNCMMGDNRQMLLITGPNMSGKSTYMRQIALISIMAQIGCFVPAKKAVLPIFDQIFTRIGAADDLISGQSTFMVEMLEAKNAIVNATKNSLILFDEIGRGTSTYDGMALAQAIIEYVHDHIGAKTLFSTHYHELTVLEDKLPQLKNVHVRAEEYNGTVVFLHQIKEGAADKSYGIHVAQLAELPGDLIARAQDILKELEHSGNKPEVPVQKPQVKEEPAQLSFFDEAEKPAETPKLSKKEKQVIDAFKSLNILDMTPLEAMNEMYKLQKKLH.

Residue 602–609 (GPNMSGKS) participates in ATP binding.

It belongs to the DNA mismatch repair MutS family.

Its function is as follows. This protein is involved in the repair of mismatches in DNA. It is possible that it carries out the mismatch recognition step. This protein has a weak ATPase activity. Overexpression of mutSL partially suppresses the high spontaneous mutation frequency of a ytkD/mutM/mutY triple disruption which lacks the system required to prevent damage by oxidized guanine (8-oxo-dGTP). This suggests that MutSL also functions to repair mismatches due to oxidative stress in both growing and stationary phase cells. The chain is DNA mismatch repair protein MutS from Bacillus subtilis (strain 168).